A 350-amino-acid polypeptide reads, in one-letter code: Ketol-acid reductoisomerase (NADP(+)) 2 (350 aa).

One can recognise a KARI N-terminal Rossmann domain in the interval 3–183 (ATIWYEKDAD…GALRAGAIKT (181 aa)). NADP(+) contacts are provided by residues 26-29 (YGSQ), R49, S52, S54, and 84-87 (DQYQ). The active site involves H109. G135 is a binding site for NADP(+). The KARI C-terminal knotted domain occupies 184–327 (TFTEETETDL…PKLRAMFSWN (144 aa)). Positions 192, 196, 228, and 232 each coordinate Mg(2+). S253 lines the substrate pocket. The tract at residues 331 to 350 (AKDKDETESFNGKIARTQVQ) is disordered.

It belongs to the ketol-acid reductoisomerase family. Requires Mg(2+) as cofactor.

It carries out the reaction (2R)-2,3-dihydroxy-3-methylbutanoate + NADP(+) = (2S)-2-acetolactate + NADPH + H(+). It catalyses the reaction (2R,3R)-2,3-dihydroxy-3-methylpentanoate + NADP(+) = (S)-2-ethyl-2-hydroxy-3-oxobutanoate + NADPH + H(+). The protein operates within amino-acid biosynthesis; L-isoleucine biosynthesis; L-isoleucine from 2-oxobutanoate: step 2/4. It participates in amino-acid biosynthesis; L-valine biosynthesis; L-valine from pyruvate: step 2/4. Its function is as follows. Involved in the biosynthesis of branched-chain amino acids (BCAA). Catalyzes an alkyl-migration followed by a ketol-acid reduction of (S)-2-acetolactate (S2AL) to yield (R)-2,3-dihydroxy-isovalerate. In the isomerase reaction, S2AL is rearranged via a Mg-dependent methyl migration to produce 3-hydroxy-3-methyl-2-ketobutyrate (HMKB). In the reductase reaction, this 2-ketoacid undergoes a metal-dependent reduction by NADPH to yield (R)-2,3-dihydroxy-isovalerate. In Bifidobacterium longum (strain NCC 2705), this protein is Ketol-acid reductoisomerase (NADP(+)) 2.